Consider the following 789-residue polypeptide: Ribonucleoside-diphosphate reductase large subunit (789 aa).

Residues Thr207, 222 to 223, Gly253, 435 to 439, and 620 to 624 contribute to the substrate site; these read SC, NLCTE, and PTVSS. Cysteines 223 and 452 form a disulfide. Asn435 functions as the Proton acceptor in the catalytic mechanism. The Cysteine radical intermediate role is filled by Cys437. Residue Glu439 is the Proton acceptor of the active site.

Belongs to the ribonucleoside diphosphate reductase large chain family. Heterotetramer composed of a homodimer of the large subunit (R1) and a homodimer of the small subunit (R2). Larger multisubunit protein complex are also active, composed of (R1)n(R2)n.

It carries out the reaction a 2'-deoxyribonucleoside 5'-diphosphate + [thioredoxin]-disulfide + H2O = a ribonucleoside 5'-diphosphate + [thioredoxin]-dithiol. Ribonucleoside-diphosphate reductase holoenzyme provides the precursors necessary for viral DNA synthesis. Allows virus growth in non-dividing cells, as well as reactivation from latency in infected hosts. Catalyzes the biosynthesis of deoxyribonucleotides from the corresponding ribonucleotides. The sequence is that of Ribonucleoside-diphosphate reductase large subunit from Equus caballus (Horse).